Consider the following 344-residue polypeptide: Glucan endo-1,3-beta-glucosidase (344 aa).

The N-terminal stretch at M1–A27 is a signal peptide. E123 functions as the Proton donor in the catalytic mechanism. E268 functions as the Nucleophile in the catalytic mechanism.

The protein belongs to the glycosyl hydrolase 17 family.

The enzyme catalyses Hydrolysis of (1-&gt;3)-beta-D-glucosidic linkages in (1-&gt;3)-beta-D-glucans.. In terms of biological role, implicated in the defense of plants against pathogens. In Vitis vinifera (Grape), this protein is Glucan endo-1,3-beta-glucosidase.